We begin with the raw amino-acid sequence, 83 residues long: Large ribosomal subunit protein bL31 (83 aa).

It belongs to the bacterial ribosomal protein bL31 family. Type A subfamily. Part of the 50S ribosomal subunit.

Its function is as follows. Binds the 23S rRNA. The chain is Large ribosomal subunit protein bL31 from Synechococcus sp. (strain CC9605).